We begin with the raw amino-acid sequence, 226 residues long: Phosphoglycolate phosphatase (226 aa).

The active-site Nucleophile is Asp-9. Mg(2+) is bound by residues Asp-9 and Asp-11. Lys-150 lines the substrate pocket. Asp-173 and Asp-177 together coordinate Mg(2+).

This sequence belongs to the archaeal SPP-like hydrolase family. Requires Mg(2+) as cofactor.

The catalysed reaction is 2-phosphoglycolate + H2O = glycolate + phosphate. Its function is as follows. Catalyzes the dephosphorylation of 2-phosphoglycolate. This Methanosarcina acetivorans (strain ATCC 35395 / DSM 2834 / JCM 12185 / C2A) protein is Phosphoglycolate phosphatase.